Here is a 383-residue protein sequence, read N- to C-terminus: Chaperone protein DnaJ (383 aa).

Residues 6–71 (DYYEVLGVSK…QKRSQYDQFG (66 aa)) enclose the J domain. The CR-type zinc finger occupies 141-223 (GVEKKVKVKK…CKGEGVEIGE (83 aa)). C154, C157, C171, C174, C197, C200, C211, and C214 together coordinate Zn(2+). CXXCXGXG motif repeat units follow at residues 154-161 (CSKCRGDG), 171-178 (CQTCHGTG), 197-204 (CPTCHGEG), and 211-218 (CSKCKGEG).

It belongs to the DnaJ family. In terms of assembly, homodimer. Requires Zn(2+) as cofactor.

The protein localises to the cytoplasm. In terms of biological role, participates actively in the response to hyperosmotic and heat shock by preventing the aggregation of stress-denatured proteins and by disaggregating proteins, also in an autonomous, DnaK-independent fashion. Unfolded proteins bind initially to DnaJ; upon interaction with the DnaJ-bound protein, DnaK hydrolyzes its bound ATP, resulting in the formation of a stable complex. GrpE releases ADP from DnaK; ATP binding to DnaK triggers the release of the substrate protein, thus completing the reaction cycle. Several rounds of ATP-dependent interactions between DnaJ, DnaK and GrpE are required for fully efficient folding. Also involved, together with DnaK and GrpE, in the DNA replication of plasmids through activation of initiation proteins. The chain is Chaperone protein DnaJ from Porphyromonas gingivalis (strain ATCC BAA-308 / W83).